The sequence spans 397 residues: 1-deoxy-D-xylulose 5-phosphate reductoisomerase (397 aa).

Residues T10, G11, S12, I13, N39, and N125 each contribute to the NADPH site. Position 126 (K126) interacts with 1-deoxy-D-xylulose 5-phosphate. E127 serves as a coordination point for NADPH. D151 lines the Mn(2+) pocket. 1-deoxy-D-xylulose 5-phosphate contacts are provided by S152, E153, S187, and H210. Residue E153 coordinates Mn(2+). An NADPH-binding site is contributed by G216. 4 residues coordinate 1-deoxy-D-xylulose 5-phosphate: S223, N228, K229, and E232. E232 serves as a coordination point for Mn(2+).

The protein belongs to the DXR family. As to quaternary structure, homodimer. It depends on Mg(2+) as a cofactor. Mn(2+) serves as cofactor.

It carries out the reaction 2-C-methyl-D-erythritol 4-phosphate + NADP(+) = 1-deoxy-D-xylulose 5-phosphate + NADPH + H(+). Its pathway is isoprenoid biosynthesis; isopentenyl diphosphate biosynthesis via DXP pathway; isopentenyl diphosphate from 1-deoxy-D-xylulose 5-phosphate: step 1/6. Catalyzes the NADPH-dependent rearrangement and reduction of 1-deoxy-D-xylulose-5-phosphate (DXP) to 2-C-methyl-D-erythritol 4-phosphate (MEP). The polypeptide is 1-deoxy-D-xylulose 5-phosphate reductoisomerase (Wigglesworthia glossinidia brevipalpis).